The chain runs to 205 residues: Small ribosomal subunit protein uS4 (205 aa).

A compositionally biased stretch (basic and acidic residues) spans 1–16; that stretch reads MSKRESAKHKIDRRLG. The interval 1–46 is disordered; it reads MSKRESAKHKIDRRLGENIWGRPKSPVNRREYGPGQHGQRRKGKLS. One can recognise an S4 RNA-binding domain in the interval 94–157; sequence SRLDAVVYRA…KQLAIVLEAV (64 aa).

Belongs to the universal ribosomal protein uS4 family. In terms of assembly, part of the 30S ribosomal subunit. Contacts protein S5. The interaction surface between S4 and S5 is involved in control of translational fidelity.

Functionally, one of the primary rRNA binding proteins, it binds directly to 16S rRNA where it nucleates assembly of the body of the 30S subunit. Its function is as follows. With S5 and S12 plays an important role in translational accuracy. The chain is Small ribosomal subunit protein uS4 from Brucella abortus (strain S19).